The chain runs to 496 residues: Bifunctional protein HldE (496 aa).

Residues 1-335 (MIKHNPPSPE…GALFRSHGPT (335 aa)) are ribokinase. 211–214 (NRKE) serves as a coordination point for ATP. Aspartate 280 is an active-site residue. Positions 363–496 (FTNGCFDILH…IGKLRAGSTS (134 aa)) are cytidylyltransferase.

In the N-terminal section; belongs to the carbohydrate kinase PfkB family. This sequence in the C-terminal section; belongs to the cytidylyltransferase family. As to quaternary structure, homodimer.

It carries out the reaction D-glycero-beta-D-manno-heptose 7-phosphate + ATP = D-glycero-beta-D-manno-heptose 1,7-bisphosphate + ADP + H(+). The catalysed reaction is D-glycero-beta-D-manno-heptose 1-phosphate + ATP + H(+) = ADP-D-glycero-beta-D-manno-heptose + diphosphate. Its pathway is nucleotide-sugar biosynthesis; ADP-L-glycero-beta-D-manno-heptose biosynthesis; ADP-L-glycero-beta-D-manno-heptose from D-glycero-beta-D-manno-heptose 7-phosphate: step 1/4. The protein operates within nucleotide-sugar biosynthesis; ADP-L-glycero-beta-D-manno-heptose biosynthesis; ADP-L-glycero-beta-D-manno-heptose from D-glycero-beta-D-manno-heptose 7-phosphate: step 3/4. Its function is as follows. Catalyzes the phosphorylation of D-glycero-D-manno-heptose 7-phosphate at the C-1 position to selectively form D-glycero-beta-D-manno-heptose-1,7-bisphosphate. Functionally, catalyzes the ADP transfer from ATP to D-glycero-beta-D-manno-heptose 1-phosphate, yielding ADP-D-glycero-beta-D-manno-heptose. In Mesorhizobium japonicum (strain LMG 29417 / CECT 9101 / MAFF 303099) (Mesorhizobium loti (strain MAFF 303099)), this protein is Bifunctional protein HldE.